The chain runs to 412 residues: Proteasome-activating nucleotidase (412 aa).

Residues 18–72 (YRYLVDRVAGMESQNQELKEQIRQLESDKRYIETQKIRYEREVRKLKSEIEHLKT) adopt a coiled-coil conformation. ATP contacts are provided by residues 197–202 (GTGKTL) and histidine 336. The docks into pockets in the proteasome alpha-ring to cause gate opening stretch occupies residues 410-412 (MFA).

The protein belongs to the AAA ATPase family. Homohexamer. The hexameric complex has a two-ring architecture resembling a top hat that caps the 20S proteasome core at one or both ends. Upon ATP-binding, the C-terminus of PAN interacts with the alpha-rings of the proteasome core by binding to the intersubunit pockets.

The protein resides in the cytoplasm. ATPase which is responsible for recognizing, binding, unfolding and translocation of substrate proteins into the archaeal 20S proteasome core particle. Is essential for opening the gate of the 20S proteasome via an interaction with its C-terminus, thereby allowing substrate entry and access to the site of proteolysis. Thus, the C-termini of the proteasomal ATPase function like a 'key in a lock' to induce gate opening and therefore regulate proteolysis. Unfolding activity requires energy from ATP hydrolysis, whereas ATP binding alone promotes ATPase-20S proteasome association which triggers gate opening, and supports translocation of unfolded substrates. The sequence is that of Proteasome-activating nucleotidase from Methanospirillum hungatei JF-1 (strain ATCC 27890 / DSM 864 / NBRC 100397 / JF-1).